Here is a 483-residue protein sequence, read N- to C-terminus: Membrane-bound lytic murein transglycosylase F (483 aa).

Residues 1 to 18 (MKGLIARFIAGFALLLWA) form the signal peptide. A non-LT domain region spans residues 19 to 267 (WDMVFPWQQL…RIEEKYFNHL (249 aa)). Residues 269 to 483 (HFDYVDIQSY…SKESDSTLKE (215 aa)) are LT domain. Glutamate 312 is an active-site residue. The segment at 459–483 (QIQNNEEQSSVPQEISKESDSTLKE) is disordered. The span at 473–483 (ISKESDSTLKE) shows a compositional bias: basic and acidic residues.

This sequence in the N-terminal section; belongs to the bacterial solute-binding protein 3 family. It in the C-terminal section; belongs to the transglycosylase Slt family.

The protein resides in the cell outer membrane. It catalyses the reaction Exolytic cleavage of the (1-&gt;4)-beta-glycosidic linkage between N-acetylmuramic acid (MurNAc) and N-acetylglucosamine (GlcNAc) residues in peptidoglycan, from either the reducing or the non-reducing ends of the peptidoglycan chains, with concomitant formation of a 1,6-anhydrobond in the MurNAc residue.. In terms of biological role, murein-degrading enzyme that degrades murein glycan strands and insoluble, high-molecular weight murein sacculi, with the concomitant formation of a 1,6-anhydromuramoyl product. Lytic transglycosylases (LTs) play an integral role in the metabolism of the peptidoglycan (PG) sacculus. Their lytic action creates space within the PG sacculus to allow for its expansion as well as for the insertion of various structures such as secretion systems and flagella. The sequence is that of Membrane-bound lytic murein transglycosylase F from Actinobacillus pleuropneumoniae serotype 7 (strain AP76).